A 291-amino-acid chain; its full sequence is 3-hydroxy-5-phosphonooxypentane-2,4-dione thiolase (291 aa).

The active-site Schiff-base intermediate with substrate is lysine 203.

The protein belongs to the DeoC/FbaB aldolase family. As to quaternary structure, homodecamer.

Its subcellular location is the cytoplasm. It catalyses the reaction dihydroxyacetone phosphate + acetyl-CoA = 3-hydroxy-2,4-dioxopentyl phosphate + CoA. Functionally, involved in the degradation of phospho-AI-2, thereby terminating induction of the lsr operon and closing the AI-2 signaling cycle. Catalyzes the transfer of an acetyl moiety from 3-hydroxy-5-phosphonooxypentane-2,4-dione to CoA to form glycerone phosphate and acetyl-CoA. This Salmonella typhimurium (strain LT2 / SGSC1412 / ATCC 700720) protein is 3-hydroxy-5-phosphonooxypentane-2,4-dione thiolase.